The primary structure comprises 884 residues: Probable ribonuclease ZC3H12C (884 aa).

The interval 66–108 (KPTMDTVNSGKEGKGVSEENVSSGDSEGSTSSDHESEQLSSLS) is disordered. The segment covering 87 to 96 (SSGDSEGSTS) has biased composition (low complexity). Residue serine 231 is modified to Phosphoserine. One can recognise an RNase NYN domain in the interval 246-401 (LRPVVIDGSN…LGRHGPSLDN (156 aa)). The segment at 411-436 (EHKKQPCPYGKKCTYGHKCKYYHPER) adopts a C3H1-type zinc-finger fold. The span at 456–478 (AAKTTNEGGLVKSNSVPCSTKAD) shows a compositional bias: polar residues. Disordered stretches follow at residues 456–548 (AAKT…SGVH), 716–739 (VGAR…KAPH), and 755–776 (SRLY…EGLG). Basic and acidic residues predominate over residues 500–516 (VYQDIEEKLPTKNKLET). Over residues 518 to 543 (SVPSLVSIPATSTAKPQSTTPLSNGL) the composition is skewed to polar residues.

Belongs to the ZC3H12 family. Mg(2+) serves as cofactor.

In terms of biological role, may function as RNase and regulate the levels of target RNA species. The protein is Probable ribonuclease ZC3H12C (Zc3h12c) of Mus musculus (Mouse).